The following is a 399-amino-acid chain: STOREKEEPER protein (399 aa).

Disordered stretches follow at residues Met1 to Trp160 and Gly250 to Gln301. Positions Glu20–Glu54 are enriched in acidic residues. The segment covering Lys69–Phe79 has biased composition (polar residues). Composition is skewed to low complexity over residues Ser80–Ser100 and Ala116–Pro125. Composition is skewed to basic and acidic residues over residues Lys143 to Ser152 and Lys270 to Glu299.

The protein belongs to the GeBP family. In terms of tissue distribution, expressed in tubers and in leaves treated with sucrose.

The protein localises to the nucleus. May act as a transcriptional regulator. Binds specifically to the B-box motif, a promoter element that is required for the tuber-specific and sucrose inducible expression of the patatin gene. The chain is STOREKEEPER protein from Solanum tuberosum (Potato).